The chain runs to 237 residues: MERRADAATGKRPIRSFVRREGRLTAGQQRALELLWPAFGLERPPAGQPLDLDRAFGRRAPRILEIGFGNGESLAEQAATHPERDYLGIEVHRPGVGHLLMEVEKRHLGNVRVMMADAAEVLAHHIPDGSLHGVQLFFPDPWPKKRHHKRRLVQPQWVRAVAAKLAPGGFLHLATDWADYAEHMLDVLEAEPDLENTCGPRQFSPRGERPETKFERRGLRKGHQVFDLYYRKREHPG.

S-adenosyl-L-methionine is bound by residues glutamate 65, glutamate 90, aspartate 117, and aspartate 140. Aspartate 140 is a catalytic residue. Residues lysine 144, aspartate 176, and 212–215 (TKFE) contribute to the substrate site. The tract at residues 197 to 217 (TCGPRQFSPRGERPETKFERR) is disordered. Positions 206–217 (RGERPETKFERR) are enriched in basic and acidic residues.

This sequence belongs to the class I-like SAM-binding methyltransferase superfamily. TrmB family.

It catalyses the reaction guanosine(46) in tRNA + S-adenosyl-L-methionine = N(7)-methylguanosine(46) in tRNA + S-adenosyl-L-homocysteine. The protein operates within tRNA modification; N(7)-methylguanine-tRNA biosynthesis. Its function is as follows. Catalyzes the formation of N(7)-methylguanine at position 46 (m7G46) in tRNA. This is tRNA (guanine-N(7)-)-methyltransferase from Alkalilimnicola ehrlichii (strain ATCC BAA-1101 / DSM 17681 / MLHE-1).